The chain runs to 494 residues: Glycerol kinase (494 aa).

ADP is bound at residue T13. 3 residues coordinate ATP: T13, T14, and S15. T13 provides a ligand contact to sn-glycerol 3-phosphate. R17 contributes to the ADP binding site. Residues R83, E84, Y135, and D244 each coordinate sn-glycerol 3-phosphate. R83, E84, Y135, D244, and Q245 together coordinate glycerol. T266 and G309 together coordinate ADP. Positions 266, 309, 313, and 410 each coordinate ATP. 2 residues coordinate ADP: G410 and N414.

Belongs to the FGGY kinase family.

It catalyses the reaction glycerol + ATP = sn-glycerol 3-phosphate + ADP + H(+). Its pathway is polyol metabolism; glycerol degradation via glycerol kinase pathway; sn-glycerol 3-phosphate from glycerol: step 1/1. With respect to regulation, inhibited by fructose 1,6-bisphosphate (FBP). Key enzyme in the regulation of glycerol uptake and metabolism. Catalyzes the phosphorylation of glycerol to yield sn-glycerol 3-phosphate. The protein is Glycerol kinase of Shewanella sp. (strain MR-4).